The chain runs to 327 residues: MDKVLHATSLPILPGAIMSKNDAPEVEQLFKENGRLYQVWPRDRYLLPADQTEQDRLDIFSQLFKIILKEKLHTDASRVEENSHVLDLGCGTGLWVILMAHELHPKPSLFIGADVQMTQPDLIPATVRFTPADIEAPWTDEMVQHAPYDLINCRLMKGAIRSWPALYEKIAAHLKPETGVFEQFEIDWQFRCDDGPIPPALKQWSDEVMQAMDQHGMSIRCNREETRSMLLNHGFDDVQEQAIVLPISNWAEDERGREIGRWFNLALNHSTLPMSLAPLFRVMKKTPQYIDELNKAASREVCSQAHTDGVYCMLYIWTARTRPSRRR.

This sequence belongs to the methyltransferase superfamily. LaeA methyltransferase family.

The protein localises to the nucleus. The catalysed reaction is L-methionyl-[protein] + S-adenosyl-L-methionine = S-methyl-L-methionyl-[protein] + S-adenosyl-L-homocysteine. In terms of biological role, secondary metabolism regulator that controls the expression of the tenuazonic acid biosynthesis cluster. Methyltransferase that performs automethylation. No other methyl-accepting substrate has been identified yet. The sequence is that of Secondary metabolism regulator LAE1 from Pyricularia oryzae (strain 70-15 / ATCC MYA-4617 / FGSC 8958) (Rice blast fungus).